The following is a 321-amino-acid chain: Phosphate acyltransferase (321 aa).

The protein belongs to the PlsX family. In terms of assembly, homodimer. Probably interacts with PlsY.

The protein localises to the cytoplasm. The enzyme catalyses a fatty acyl-[ACP] + phosphate = an acyl phosphate + holo-[ACP]. Its pathway is lipid metabolism; phospholipid metabolism. Its function is as follows. Catalyzes the reversible formation of acyl-phosphate (acyl-PO(4)) from acyl-[acyl-carrier-protein] (acyl-ACP). This enzyme utilizes acyl-ACP as fatty acyl donor, but not acyl-CoA. The polypeptide is Phosphate acyltransferase (Chlamydia trachomatis serovar A (strain ATCC VR-571B / DSM 19440 / HAR-13)).